The sequence spans 475 residues: CAAX prenyl protease 1 homolog (475 aa).

Over 1 to 18 (MGMWASVDAMWDFPAEKR) the chain is Lumenal. A helical transmembrane segment spans residues 19–39 (IFGAVLLFSWTVYLWETFLAQ). The Nuclear portion of the chain corresponds to 40-81 (RQRRIYKTTTRVPAELEQIMDSDTFEKSRLYQLDKSTFSFWS). A helical membrane pass occupies residues 82–102 (GLYSEVEGTFILLFGGIPYLW). Topologically, residues 103–123 (RLSGQFCSSAGFGPEYEIIQS) are lumenal. Residues 124–144 (LVFLLLATLFSALTGLPWSLY) traverse the membrane as a helical segment. The Nuclear portion of the chain corresponds to 145–170 (NTFVIEEKHGFNHQTLEFFMKDAIKK). A helical membrane pass occupies residues 171–191 (FIVTQCILLPVSALLLYIIKI). At 192–195 (GGDY) the chain is on the lumenal side. A helical transmembrane segment spans residues 196 to 216 (FFIYAWLFTLVVSLVLVTIYA). Residues 217–347 (DYIAPLFDKF…GHWKLGHTVK (131 aa)) are Nuclear-facing. Residues 293 to 314 (DNQEESGMEARNEGEGDSEEVK) are disordered. Residues 300-314 (MEARNEGEGDSEEVK) are compositionally biased toward basic and acidic residues. Residue His335 coordinates Zn(2+). Glu336 is an active-site residue. His339 is a binding site for Zn(2+). Residues 348–368 (NIIISQMNSFLCFFLFAVLIG) traverse the membrane as a helical segment. At 369 to 382 (RRELFAAFGFYDSQ) the chain is on the lumenal side. Residues 383 to 405 (PTLIGLLIIFQFIFSPYNEVLSF) traverse the membrane as a helical segment. Residues 406-475 (CLTVLSRRFE…LQALKNAKQD (70 aa)) are Nuclear-facing. Glu415 serves as a coordination point for Zn(2+).

Belongs to the peptidase M48A family. The cofactor is Zn(2+).

The protein resides in the endoplasmic reticulum membrane. The protein localises to the nucleus inner membrane. It is found in the early endosome membrane. It localises to the late endosome membrane. It carries out the reaction Hydrolyzes the peptide bond -P2-(S-farnesyl or geranylgeranyl)C-P1'-P2'-P3'-COOH where P1' and P2' are amino acids with aliphatic side chains and P3' is any C-terminal residue.. Inhibited by HIV protease inhibitors, such as lopinavir, tipranavir and nelfinavir, leading to defects in lamin A/LMNA maturation and accumulation of prelamin-A/C precursors in cells. This causes defects in nuclear envelope integrity and release of DNA in the cytosol, activating the AIM2 inflammasome. In terms of biological role, transmembrane metalloprotease whose catalytic activity is critical for processing lamin A/LMNA on the inner nuclear membrane and clearing clogged translocons on the endoplasmic reticulum. Proteolytically removes the C-terminal three residues of farnesylated proteins. Also plays an antiviral role independently of its protease activity by restricting enveloped RNA and DNA viruses. Mechanistically, controls IFITM antiviral pathway to hinder viruses from breaching the endosomal barrier by modulating membrane fluidity. This chain is CAAX prenyl protease 1 homolog, found in Mus musculus (Mouse).